Reading from the N-terminus, the 150-residue chain is Lymphocyte antigen 6 complex locus protein G5c (150 aa).

Residues 1-41 (MRFMAGPAGSQSLGPLCFHSSPQALYTVLLIVLVMMSLVFG) form the signal peptide. The UPAR/Ly6 domain maps to 60–150 (LRCYRCLLET…DPQNRGLYTP (91 aa)). Cystine bridges form between Cys62–Cys89, Cys65–Cys74, Cys81–Cys107, and Cys134–Cys139. N-linked (GlcNAc...) asparagine glycosylation occurs at Asn96.

Forms oligomers. Post-translationally, N-glycosylated. As to expression, detected in T-cell lines and fetal and adult lung.

The protein localises to the secreted. May have a role in hematopoietic cell differentiation. The sequence is that of Lymphocyte antigen 6 complex locus protein G5c (LY6G5C) from Homo sapiens (Human).